Reading from the N-terminus, the 541-residue chain is Protein wntless homolog B (541 aa).

Residues 1-15 (MAGAIIENMSTKKLC) lie on the Cytoplasmic side of the membrane. A helical transmembrane segment spans residues 16–36 (MVGVALLLLQVLAFLVGGLIA). The Lumenal portion of the chain corresponds to 37–232 (PKPTTYVNPV…SIFQNGGFTM (196 aa)). Residues 233 to 253 (VWFAMKTFLTPCIIIIMIWYW) traverse the membrane as a helical segment. Over 254-268 (RRITMMTRSPVLLEK) the chain is Cytoplasmic. Residues 269 to 289 (VIFALGISMTFINIPVEWFSI) traverse the membrane as a helical segment. Residues 290 to 303 (GYDWTWMLLFGDIR) lie on the Lumenal side of the membrane. The helical transmembrane segment at 304–324 (QGIFYAMLLSFWIIFCGEHMM) threads the bilayer. Topologically, residues 325–331 (DQAERNR) are cytoplasmic. Residues 332–352 (ISIYWKQVGPIAFGSCCLFIF) traverse the membrane as a helical segment. Topologically, residues 353-379 (DMCERGVQLKNPFYSIWTTDVGAEIAM) are lumenal. Residues 380-400 (AFIIVAGICACLYFLFLCFMV) form a helical membrane-spanning segment. Residues 401–431 (YQVFRNISGKRSNLPAMSKARRLHYEGLIFR) are Cytoplasmic-facing. Residues 432–452 (FKFLMIITLACAALTVVFFIT) form a helical membrane-spanning segment. Topologically, residues 453-471 (TQITEGNWKLGDLSIELNS) are lumenal. Residues 472 to 492 (AFFTGIYGMWNLYVFALMFLY) form a helical membrane-spanning segment. Residues 493–541 (APSHKHYGDGQSNDGAGMSSGEELQLTTTITHIDGPTELYRLAGKEAQE) lie on the Cytoplasmic side of the membrane.

Belongs to the wntless family. Enriched in the animal hemisphere of the early cleavage embryo, where expression persists until the late gastrula stage. At the neurula stage, strongly expressed at the border of the neural plate and dorsal midline. After the neurula stage, expressed in various organs, including the eye, liver, heart, pronephros, otic vesicle, and dorsal neural tube. Expression in the developing eye is dynamic; expressed in the eye field from stages 23 to 27, and from stage 30 expression is confined to distinct regions including the central part and border of the eye.

It is found in the golgi apparatus membrane. Its subcellular location is the cytoplasmic vesicle membrane. In terms of biological role, required for a subset of Wnt-dependent developmental processes, in particular, eye and pronephros development. Regulates the secretion of wnt4, which is required for eye development. The sequence is that of Protein wntless homolog B (wls-b) from Xenopus laevis (African clawed frog).